Reading from the N-terminus, the 141-residue chain is 3-hydroxyacyl-[acyl-carrier-protein] dehydratase FabZ (141 aa).

The active site involves H49.

It belongs to the thioester dehydratase family. FabZ subfamily.

The protein localises to the cytoplasm. The enzyme catalyses a (3R)-hydroxyacyl-[ACP] = a (2E)-enoyl-[ACP] + H2O. Its function is as follows. Involved in unsaturated fatty acids biosynthesis. Catalyzes the dehydration of short chain beta-hydroxyacyl-ACPs and long chain saturated and unsaturated beta-hydroxyacyl-ACPs. The chain is 3-hydroxyacyl-[acyl-carrier-protein] dehydratase FabZ from Clostridium acetobutylicum (strain ATCC 824 / DSM 792 / JCM 1419 / IAM 19013 / LMG 5710 / NBRC 13948 / NRRL B-527 / VKM B-1787 / 2291 / W).